Reading from the N-terminus, the 494-residue chain is Serine/threonine-protein kinase cst-1 (494 aa).

Residues 1-27 (MPPSTDSSRRNSEEGFSDGFKLDSSAL) are disordered. Residues 35–286 (FDIVGKLGEG…ALRLCEHTFI (252 aa)) form the Protein kinase domain. Residues 41–49 (LGEGSYGSV) and Lys-64 contribute to the ATP site. Catalysis depends on Asp-154, which acts as the Proton acceptor. The tract at residues 364-413 (IPKSAYGSSRNNGSPRVQPPGHTASACDPSNNPPFAEEGTGPNFQIGTSE) is disordered. Over residues 369-378 (YGSSRNNGSP) the composition is skewed to polar residues. The 48-residue stretch at 443-490 (FEFLRNITLDELIRRKESLDSEMEEEIRELQRRYKTKRQPILDVIEIK) folds into the SARAH domain.

It belongs to the protein kinase superfamily. STE Ser/Thr protein kinase family. STE20 subfamily. The cofactor is Mg(2+). Post-translationally, proteolytically cleaved by caspase-3 during apoptosis which results in kinase activation.

It carries out the reaction L-seryl-[protein] + ATP = O-phospho-L-seryl-[protein] + ADP + H(+). The catalysed reaction is L-threonyl-[protein] + ATP = O-phospho-L-threonyl-[protein] + ADP + H(+). Functionally, serine/threonine-protein kinase which extends lifespan and delays tissue aging, probably by activating daf-16. The protein is Serine/threonine-protein kinase cst-1 (cst-1) of Caenorhabditis briggsae.